The primary structure comprises 227 residues: 6,7-dimethyl-8-ribityllumazine synthase, chloroplastic (227 aa).

The transit peptide at 1–71 directs the protein to the chloroplast; sequence MKSLASPPCL…LRSSFVQTAA (71 aa). 5-amino-6-(D-ribitylamino)uracil contacts are provided by residues F94, 128-130, and 152-154; these read SFE and AVI. A (2S)-2-hydroxy-3-oxobutyl phosphate-binding site is contributed by 157–158; it reads DT. H160 serves as the catalytic Proton donor. Position 185 (F185) interacts with 5-amino-6-(D-ribitylamino)uracil. R199 contributes to the (2S)-2-hydroxy-3-oxobutyl phosphate binding site.

The protein belongs to the DMRL synthase family. As to quaternary structure, oligomer forming an icosahedral capsid.

It localises to the plastid. The protein resides in the chloroplast. It carries out the reaction (2S)-2-hydroxy-3-oxobutyl phosphate + 5-amino-6-(D-ribitylamino)uracil = 6,7-dimethyl-8-(1-D-ribityl)lumazine + phosphate + 2 H2O + H(+). Its pathway is cofactor biosynthesis; riboflavin biosynthesis; riboflavin from 2-hydroxy-3-oxobutyl phosphate and 5-amino-6-(D-ribitylamino)uracil: step 1/2. Functionally, catalyzes the formation of 6,7-dimethyl-8-ribityllumazine by condensation of 5-amino-6-(D-ribitylamino)uracil with 3,4-dihydroxy-2-butanone 4-phosphate. This is the penultimate step in the biosynthesis of riboflavin. In Arabidopsis thaliana (Mouse-ear cress), this protein is 6,7-dimethyl-8-ribityllumazine synthase, chloroplastic.